A 418-amino-acid chain; its full sequence is Inner capsid protein sigma-2 (418 aa).

The protein belongs to the orthoreovirus sigma-1 protein family. In terms of assembly, interacts with protein mu-NS; in viral inclusions.

It is found in the virion. In terms of biological role, inner capsid (core) component. This Reovirus type 3 (strain Dearing) (T3D) protein is Inner capsid protein sigma-2 (S2).